The sequence spans 319 residues: Oxaloacetate tautomerase fahd2, mitochondrial (319 aa).

A mitochondrion-targeting transit peptide spans 1 to 31 (MLTQTRVALRVLKNAHLTLPKRNISQSPALS). Mg(2+) is bound by residues glutamate 164, glutamate 166, and aspartate 195.

This sequence belongs to the FAH family. The cofactor is Mg(2+). It depends on Mn(2+) as a cofactor.

Its subcellular location is the mitochondrion. The enzyme catalyses oxaloacetate = enol-oxaloacetate. Functionally, tautomerase that converts enol-oxaloacetate, a strong inhibitor of succinate dehydrogenase, to the physiological keto form of oxaloacetate. It is thereby required to maximize aerobic respiration efficiency by preventing succinate dehydrogenase inhibition. The polypeptide is Oxaloacetate tautomerase fahd2, mitochondrial (fahd2) (Xenopus laevis (African clawed frog)).